An 893-amino-acid polypeptide reads, in one-letter code: NEDD4-binding protein 1 (893 aa).

The KH-like domain maps to 59 to 143 (QEAVHSAKEY…IQQFVKLFES (85 aa)). The disordered stretch occupies residues 213-243 (EYTQSAATGPSSARDEVVVQEDSRNKARTPV). Residues 214–223 (YTQSAATGPS) show a composition bias toward polar residues. Basic and acidic residues predominate over residues 225–237 (ARDEVVVQEDSRN). The residue at position 241 (Thr-241) is a Phosphothreonine. Phosphoserine occurs at positions 257, 269, and 299. Disordered stretches follow at residues 273-339 (DALS…DGKD), 394-433 (RDFPPCTVYPDASQSRNAGVGSTTNELTADSTPKKAQSHT), and 472-564 (IWGS…PPLP). Composition is skewed to polar residues over residues 405–433 (ASQSRNAGVGSTTNELTADSTPKKAQSHT) and 523–537 (GFQQQTEPLLPNNTK). Positions 551-564 (QPKPNYPPLSPPLP) are enriched in pro residues. Ser-560 is modified (phosphoserine). Residues 615–767 (LKHIVIDGSN…LGRNGPRLEE (153 aa)) enclose the RNase NYN domain. Residues 793-820 (PGFRSPSTQVANNSHQPPPRIQTSSSPW) are disordered. Positions 797-820 (SPSTQVANNSHQPPPRIQTSSSPW) are enriched in polar residues. Positions 846-893 (RSSAETSELREALLKIFPDSEQKLKIDQILAAHPYMKDLNALSALVLD) are coCUN.

The protein belongs to the N4BP1 family. Interacts with NEDD4. Interacts with ITCH (via WW domain 2). Proteolytically cleaved by CASP8 downstream of TLR3 or TLR4, leading to its inactivation. Mainly cleaved at Asp-488 by CASP8. Cleaved by caspase-like protein MALT1, leading to its inactivation. Post-translationally, mono- and polyubiquitinated on the CoCUN region. Monoubiquitinated by NEDD4. Polyubiquitinated, leading to its degradation by the proteasome. Sumoylated with SUMO1, abrogating polyubiquitination and subsequent degradation. Desumoylated by SENP1, leading to accumulation in PML nuclear bodies.

The protein resides in the cytoplasm. It is found in the cytosol. The protein localises to the nucleus. It localises to the nucleolus. Its subcellular location is the PML body. Its activity is regulated as follows. Proteolytic cleavage by CASP8 or MALT1 leads to its inactivation. Potent suppressor of cytokine production that acts as a regulator of innate immune signaling and inflammation. Acts as a key negative regulator of select cytokine and chemokine responses elicited by TRIF-independent Toll-like receptors (TLRs), thereby limiting inflammatory cytokine responses to minor insults. In response to more threatening pathogens, cleaved by CASP8 downstream of TLR3 or TLR4, leading to its inactivation, thereby allowing production of inflammatory cytokines. Acts as a restriction factor against some viruses: restricts viral replication by binding to mRNA viruses and mediating their degradation via its ribonuclease activity. Also acts as an inhibitor of the E3 ubiquitin-protein ligase ITCH: acts by interacting with the second WW domain of ITCH, leading to compete with ITCH's substrates and impairing ubiquitination of substrates. This chain is NEDD4-binding protein 1, found in Mus musculus (Mouse).